The sequence spans 451 residues: AP-3 complex subunit mu (451 aa).

The MHD domain maps to 191 to 450 (NNEIYVDLVE…TSRAGDYIVR (260 aa)).

Belongs to the adaptor complexes medium subunit family. Adaptor protein complex 3 (AP-3) is a heterotetramer composed of 2 large adaptins (APL5 and APL6), a medium adaptin (APM3) and a small adaptin (APS3).

It is found in the golgi apparatus. Its subcellular location is the cytoplasmic vesicle membrane. Its function is as follows. Part of the AP-3 complex, an adaptor-related complex which is not clathrin-associated. The complex is associated with the Golgi region as well as more peripheral structures. It facilitates the budding of vesicles from the Golgi membrane and may be directly involved in trafficking to the vacuole. The protein is AP-3 complex subunit mu (APM3) of Eremothecium gossypii (strain ATCC 10895 / CBS 109.51 / FGSC 9923 / NRRL Y-1056) (Yeast).